Reading from the N-terminus, the 29-residue chain is Trypsin inhibitor 4 (29 aa).

Intrachain disulfides connect Cys-3–Cys-20, Cys-10–Cys-22, and Cys-16–Cys-28.

Belongs to the protease inhibitor I7 (squash-type serine protease inhibitor) family.

The protein localises to the secreted. Its function is as follows. Strongly inhibits trypsin, weakly inhibits chymotrypsin. The polypeptide is Trypsin inhibitor 4 (Cyclanthera pedata (Achocha)).